A 425-amino-acid chain; its full sequence is Serine--tRNA ligase (425 aa).

Residue 233 to 235 (TAE) participates in L-serine binding. ATP is bound at residue 264-266 (RRE). E287 is an L-serine binding site. 351 to 354 (EISS) contributes to the ATP binding site. S385 serves as a coordination point for L-serine.

It belongs to the class-II aminoacyl-tRNA synthetase family. Type-1 seryl-tRNA synthetase subfamily. As to quaternary structure, homodimer. The tRNA molecule binds across the dimer.

It localises to the cytoplasm. It carries out the reaction tRNA(Ser) + L-serine + ATP = L-seryl-tRNA(Ser) + AMP + diphosphate + H(+). It catalyses the reaction tRNA(Sec) + L-serine + ATP = L-seryl-tRNA(Sec) + AMP + diphosphate + H(+). It participates in aminoacyl-tRNA biosynthesis; selenocysteinyl-tRNA(Sec) biosynthesis; L-seryl-tRNA(Sec) from L-serine and tRNA(Sec): step 1/1. Its function is as follows. Catalyzes the attachment of serine to tRNA(Ser). Is also able to aminoacylate tRNA(Sec) with serine, to form the misacylated tRNA L-seryl-tRNA(Sec), which will be further converted into selenocysteinyl-tRNA(Sec). The chain is Serine--tRNA ligase from Prochlorococcus marinus (strain SARG / CCMP1375 / SS120).